Here is a 461-residue protein sequence, read N- to C-terminus: Diaboline synthase (461 aa).

Residues histidine 185 and aspartate 400 each act as proton acceptor in the active site.

Belongs to the plant acyltransferase family. As to quaternary structure, monomer.

The protein resides in the cytoplasm. The catalysed reaction is 17,18-epoxy-17-hydroxycur-19-ene + acetyl-CoA = diaboline + CoA. It participates in alkaloid biosynthesis. Functionally, acetyltransferase involved in the biosynthesis of curare monoterpene indole alkaloids (MIAs), natural products such as diaboline, a pharmacologically active compound used to regulate blood pressure. Curare alkaloids act as animal glycine receptor antagonists. Catalyzes the conversion of 17,18-epoxy-17-hydroxycur-19-ene (Wieland-Gumlich aldehyde) to diaboline. The sequence is that of Diaboline synthase from Strychnos sp.